A 273-amino-acid polypeptide reads, in one-letter code: tRNA pseudouridine synthase B (273 aa).

The active-site Nucleophile is the D38.

It belongs to the pseudouridine synthase TruB family. Type 1 subfamily.

It catalyses the reaction uridine(55) in tRNA = pseudouridine(55) in tRNA. In terms of biological role, responsible for synthesis of pseudouridine from uracil-55 in the psi GC loop of transfer RNAs. This chain is tRNA pseudouridine synthase B, found in Campylobacter curvus (strain 525.92).